The sequence spans 261 residues: UPF0246 protein AZOSEA34360 (261 aa).

It belongs to the UPF0246 family.

This Aromatoleum aromaticum (strain DSM 19018 / LMG 30748 / EbN1) (Azoarcus sp. (strain EbN1)) protein is UPF0246 protein AZOSEA34360.